The primary structure comprises 365 residues: Anhydro-N-acetylmuramic acid kinase (365 aa).

9 to 16 (GTSLDGVD) is an ATP binding site.

Belongs to the anhydro-N-acetylmuramic acid kinase family.

It carries out the reaction 1,6-anhydro-N-acetyl-beta-muramate + ATP + H2O = N-acetyl-D-muramate 6-phosphate + ADP + H(+). It functions in the pathway amino-sugar metabolism; 1,6-anhydro-N-acetylmuramate degradation. Its pathway is cell wall biogenesis; peptidoglycan recycling. In terms of biological role, catalyzes the specific phosphorylation of 1,6-anhydro-N-acetylmuramic acid (anhMurNAc) with the simultaneous cleavage of the 1,6-anhydro ring, generating MurNAc-6-P. Is required for the utilization of anhMurNAc either imported from the medium or derived from its own cell wall murein, and thus plays a role in cell wall recycling. The sequence is that of Anhydro-N-acetylmuramic acid kinase from Zymomonas mobilis subsp. mobilis (strain ATCC 31821 / ZM4 / CP4).